Here is an 82-residue protein sequence, read N- to C-terminus: Cysteine proteinase inhibitor A (82 aa).

The protein belongs to the cystatin family.

Strong inhibitor of papain and ficin but poor inhibitor of cathepsin H, B and L. The polypeptide is Cysteine proteinase inhibitor A (Helianthus annuus (Common sunflower)).